The sequence spans 110 residues: Membrane-associated protein slr1513 (110 aa).

It is found in the cellular thylakoid membrane. It localises to the cell membrane. In Synechocystis sp. (strain ATCC 27184 / PCC 6803 / Kazusa), this protein is Membrane-associated protein slr1513.